The primary structure comprises 274 residues: Oxidized low-density lipoprotein receptor 1 (274 aa).

The disordered stretch occupies residues 1–28 (MTLDDLKSNSMKDQPDEKSNGDKAEGPR). Over 1–37 (MTLDDLKSNSMKDQPDEKSNGDKAEGPRSLSTLRWRP) the chain is Cytoplasmic. The span at 13 to 26 (DQPDEKSNGDKAEG) shows a compositional bias: basic and acidic residues. Residues 38–60 (AALILGLLCLGLLVTVILLIIQL) form a helical; Signal-anchor for type II membrane protein membrane-spanning segment. C46 is lipidated: S-palmitoyl cysteine. The interval 61–150 (SQVSDLLKQQ…SGPCPQDWLW (90 aa)) is neck. Residues 61–274 (SQVSDLLKQQ…QKRANLLRAQ (214 aa)) lie on the Extracellular side of the membrane. Residues 89–142 (RQAEKSSQESQRELTEMIETLAHKLDEKSKKLMELQQQNLNLQKALEKAANFSG) adopt a coiled-coil conformation. Residue N139 is glycosylated (N-linked (GlcNAc...) asparagine). Intrachain disulfides connect C144-C155, C172-C264, and C243-C256. Residues 151-265 (HEENCYKFSS…CILNAFSICQ (115 aa)) form the C-type lectin domain.

In terms of assembly, homodimer; disulfide-linked. May form a hexamer composed of 3 homodimers. Interacts with HSP70. N-glycosylated.

It localises to the cell membrane. The protein localises to the membrane raft. It is found in the secreted. Its function is as follows. Receptor that mediates the recognition, internalization and degradation of oxidatively modified low density lipoprotein (oxLDL) by vascular endothelial cells. OxLDL is a marker of atherosclerosis that induces vascular endothelial cell activation and dysfunction, resulting in pro-inflammatory responses, pro-oxidative conditions and apoptosis. Its association with oxLDL induces the activation of NF-kappa-B through an increased production of intracellular reactive oxygen and a variety of pro-atherogenic cellular responses including a reduction of nitric oxide (NO) release, monocyte adhesion and apoptosis. In addition to binding oxLDL, it acts as a receptor for the HSP70 protein involved in antigen cross-presentation to naive T-cells in dendritic cells, thereby participating in cell-mediated antigen cross-presentation. Also involved in inflammatory process, by acting as a leukocyte-adhesion molecule at the vascular interface in endotoxin-induced inflammation. Also acts as a receptor for advanced glycation end (AGE) products, activated platelets, monocytes, apoptotic cells and both Gram-negative and Gram-positive bacteria. The polypeptide is Oxidized low-density lipoprotein receptor 1 (OLR1) (Sus scrofa (Pig)).